A 200-amino-acid chain; its full sequence is Cysteine dioxygenase type 1 (200 aa).

Fe cation contacts are provided by H86, H88, and H140. The 3'-(S-cysteinyl)-tyrosine (Cys-Tyr) cross-link spans C93–Y157.

Belongs to the cysteine dioxygenase family. As to quaternary structure, monomer. Fe(2+) serves as cofactor. The cofactor is Ni(2+). Zn(2+) is required as a cofactor. The thioether cross-link between Cys-93 and Tyr-157 plays a structural role through stabilizing the Fe(2+) ion, and prevents the production of highly damaging free hydroxyl radicals by holding the oxygen radical via hydroxyl hydrogen. In terms of tissue distribution, highly expressed in liver and placenta. Low expression in heart, brain and pancreas. Also detected in hepatoblastoma Hep-G2 cells.

It carries out the reaction L-cysteine + O2 = 3-sulfino-L-alanine + H(+). Its pathway is organosulfur biosynthesis; taurine biosynthesis; hypotaurine from L-cysteine: step 1/2. Functionally, catalyzes the oxidation of cysteine to cysteine sulfinic acid with addition of molecular dioxygen. This Homo sapiens (Human) protein is Cysteine dioxygenase type 1 (CDO1).